The following is a 148-amino-acid chain: MAHLLLLHGPNLNLLGTREPEIYGRITLPQIDAALAERAATAGHGLSSLQSNAEHVLIERIHATREDGTAFILINPGAFTHTSVALRDALLAVALPFVEIHLSNPHTREPFRHHSYLADKALGVVCGFGVDSYRIALEGVIARLGSDV.

Residue Tyr23 is the Proton acceptor of the active site. Substrate contacts are provided by Asn75, His81, and Asp88. His101 acts as the Proton donor in catalysis. Substrate is bound by residues 102–103 and Arg112; that span reads LS.

It belongs to the type-II 3-dehydroquinase family. Homododecamer.

The catalysed reaction is 3-dehydroquinate = 3-dehydroshikimate + H2O. Its pathway is metabolic intermediate biosynthesis; chorismate biosynthesis; chorismate from D-erythrose 4-phosphate and phosphoenolpyruvate: step 3/7. Its function is as follows. Catalyzes a trans-dehydration via an enolate intermediate. The protein is 3-dehydroquinate dehydratase of Xylella fastidiosa (strain M23).